The following is a 408-amino-acid chain: Interferon-activable protein 203 (408 aa).

The region spanning methionine 1 to lysine 87 is the Pyrin domain. The disordered stretch occupies residues glutamate 84 to valine 208. Positions lysine 92–lysine 102 are enriched in basic residues. Polar residues predominate over residues alanine 150–asparagine 159. Positions threonine 190–isoleucine 388 constitute an HIN-200 domain.

This sequence belongs to the HIN-200 family. In terms of tissue distribution, constitutively expressed in the thymus, bone marrow and spleen. Isoform 1 and isoform 3 are present in liver (at protein level).

It is found in the nucleus. The sequence is that of Interferon-activable protein 203 (Ifi203) from Mus musculus (Mouse).